A 213-amino-acid chain; its full sequence is Putative protein Brevis radix-like 3 (213 aa).

Positions 7–27 are disordered; it reads CSSKEGGEDGSRGAATPHGRD. The BRX domain occupies 158–213; it reads REWTAQVEPGVQITFVTLPGGGNDLKRIRFSRERFGEDRAKVWWEHNRDRIQAQYL.

It belongs to the BRX family.

It localises to the nucleus. In Oryza sativa subsp. japonica (Rice), this protein is Putative protein Brevis radix-like 3 (BRXL3).